The sequence spans 185 residues: MYSTTDFRRGLRIEIDGTPFEIVDFQHFKPGKGGAIVRTKMRNLLTGRIMDNNFRSGEKVGRPDMENRDMQFLYREDANLVFMDMTTYEQIYMPEETTEGKAGFLKEGQTIRVLLFNGTPLAIELPAALVLEVTETEPGAKGDTVSNVTKPATLETGIVIQVPIFVNQGDKVKVNTDTREYMGRE.

This sequence belongs to the elongation factor P family.

It is found in the cytoplasm. The protein operates within protein biosynthesis; polypeptide chain elongation. In terms of biological role, involved in peptide bond synthesis. Stimulates efficient translation and peptide-bond synthesis on native or reconstituted 70S ribosomes in vitro. Probably functions indirectly by altering the affinity of the ribosome for aminoacyl-tRNA, thus increasing their reactivity as acceptors for peptidyl transferase. This is Elongation factor P from Oleidesulfovibrio alaskensis (strain ATCC BAA-1058 / DSM 17464 / G20) (Desulfovibrio alaskensis).